Consider the following 695-residue polypeptide: NADPH--cytochrome P450 reductase (695 aa).

Residues 1 to 8 (MAQLDTLD) are Lumenal-facing. The chain crosses the membrane as a helical span at residues 9-31 (LVVLAVLLVGSVAYFTKGTYWAV). The Cytoplasmic portion of the chain corresponds to 32–695 (AKDPYASTGP…SGSYQEDVWS (664 aa)). The Flavodoxin-like domain maps to 66 to 221 (CVIFYGSQTG…DFLAWKEPMW (156 aa)). FMN is bound by residues 72–77 (SQTGTA), 123–126 (ATYG), 169–178 (LGNNTYEHYN), and D204. Residues 277–538 (HNPFIAPIAE…HVRHSNFKLP (262 aa)) enclose the FAD-binding FR-type domain. R296 provides a ligand contact to NADP(+). FAD-binding positions include 451–454 (RYYS), 469–471 (TAV), and 486–489 (GVTT). Residues T552, 614 to 615 (SR), 620 to 624 (KVYVQ), and E656 each bind NADP(+). W694 serves as a coordination point for FAD.

This sequence belongs to the NADPH--cytochrome P450 reductase family. In the N-terminal section; belongs to the flavodoxin family. It in the C-terminal section; belongs to the flavoprotein pyridine nucleotide cytochrome reductase family. It depends on FAD as a cofactor. Requires FMN as cofactor.

Its subcellular location is the endoplasmic reticulum membrane. The protein localises to the mitochondrion outer membrane. It is found in the cell membrane. It carries out the reaction 2 oxidized [cytochrome P450] + NADPH = 2 reduced [cytochrome P450] + NADP(+) + H(+). In terms of biological role, this enzyme is required for electron transfer from NADP to cytochrome P450 in microsomes. It can also provide electron transfer to heme oxygenase and cytochrome B5. Involved in ergosterol biosynthesis. This is NADPH--cytochrome P450 reductase from Aspergillus niger (strain ATCC MYA-4892 / CBS 513.88 / FGSC A1513).